We begin with the raw amino-acid sequence, 214 residues long: Large ribosomal subunit protein uL18 (214 aa).

This sequence belongs to the universal ribosomal protein uL18 family. Part of the 50S ribosomal subunit. Contacts the 5S and 23S rRNAs.

In terms of biological role, this is one of the proteins that bind and probably mediate the attachment of the 5S RNA into the large ribosomal subunit, where it forms part of the central protuberance. This is Large ribosomal subunit protein uL18 from Aeropyrum pernix (strain ATCC 700893 / DSM 11879 / JCM 9820 / NBRC 100138 / K1).